Consider the following 321-residue polypeptide: Aspartate carbamoyltransferase catalytic subunit (321 aa).

Arginine 64 and threonine 65 together coordinate carbamoyl phosphate. Lysine 92 provides a ligand contact to L-aspartate. Carbamoyl phosphate contacts are provided by arginine 114, histidine 142, and glutamine 145. L-aspartate-binding residues include arginine 175 and arginine 229. Residues glycine 270 and proline 271 each coordinate carbamoyl phosphate.

Belongs to the aspartate/ornithine carbamoyltransferase superfamily. ATCase family. Heterododecamer (2C3:3R2) of six catalytic PyrB chains organized as two trimers (C3), and six regulatory PyrI chains organized as three dimers (R2).

It carries out the reaction carbamoyl phosphate + L-aspartate = N-carbamoyl-L-aspartate + phosphate + H(+). It participates in pyrimidine metabolism; UMP biosynthesis via de novo pathway; (S)-dihydroorotate from bicarbonate: step 2/3. Functionally, catalyzes the condensation of carbamoyl phosphate and aspartate to form carbamoyl aspartate and inorganic phosphate, the committed step in the de novo pyrimidine nucleotide biosynthesis pathway. The chain is Aspartate carbamoyltransferase catalytic subunit from Azorhizobium caulinodans (strain ATCC 43989 / DSM 5975 / JCM 20966 / LMG 6465 / NBRC 14845 / NCIMB 13405 / ORS 571).